A 211-amino-acid chain; its full sequence is Large ribosomal subunit protein uL3 (211 aa).

Position 150 is an N5-methylglutamine (Q150).

It belongs to the universal ribosomal protein uL3 family. In terms of assembly, part of the 50S ribosomal subunit. Forms a cluster with proteins L14 and L19. Methylated by PrmB.

In terms of biological role, one of the primary rRNA binding proteins, it binds directly near the 3'-end of the 23S rRNA, where it nucleates assembly of the 50S subunit. The protein is Large ribosomal subunit protein uL3 of Pseudomonas aeruginosa (strain LESB58).